The following is a 1256-amino-acid chain: Centrosome and spindle pole-associated protein 1 (1256 aa).

2 coiled-coil regions span residues 38–62 (ADNLDEFIEEQKARLAEDKAELESD) and 114–135 (EDYERKKHKLKEELRQDYRRYL). The segment covering 189-208 (GKEESSEKFRQVEKSTEPKS) has biased composition (basic and acidic residues). 2 disordered regions span residues 189-244 (GKEE…LTPS) and 381-403 (AENKSAPDNETSKSANQDTCSPF). Positions 222–232 (LTSQIQTSCEN) are enriched in polar residues. Phosphoserine is present on Ser-244. The stretch at 244–270 (SEAYEELLNQRRLEEDRYRQLDDEIEL) forms a coiled coil. A coiled-coil region spans residues 417–449 (QRRKEKYRLELLEQMAEQQRNKRREKDLELRVA). Phosphoserine is present on residues Ser-459 and Ser-527. Residues 625 to 669 (SKQSLQSYQEALQQQIREREERRKKEREEKEEYEAKLEAEMRTYN) adopt a coiled-coil conformation. 2 disordered regions span residues 735-757 (ANKSSGHMQTQSSPFARGNVFGE) and 813-853 (EYEE…KKEE). A compositionally biased stretch (polar residues) spans 736 to 748 (NKSSGHMQTQSSP). Residues Ser-901 and Ser-920 each carry the phosphoserine modification. The tract at residues 913–932 (SSMSRAQSPPVPARKNQLRA) is disordered. The stretch at 925-964 (ARKNQLRAEEEKKNVIMELSEMRKQLRSEERRLQERLLHM) forms a coiled coil. Ser-966 is modified (phosphoserine). Disordered stretches follow at residues 1114–1147 (EDDVLPPPSQLPSARERRRNKWKGLDIDSSRPNV) and 1232–1256 (LNQEQQQIPGKPGTFTWQGLSTAHG). Positions 1246-1256 (FTWQGLSTAHG) are enriched in polar residues.

Interacts with PLEKHG6. Interacts with ARMC9, TOGARAM1, CCDC66, CEP104 and CEP290. Post-translationally, phosphorylated. Phosphorylation increases in colcemide-treated cells. As to expression, expressed in adult and fetal brain with enrichment in the cerebellum. Detected in testis.

The protein resides in the cytoplasm. The protein localises to the cytoskeleton. It localises to the microtubule organizing center. Its subcellular location is the centrosome. It is found in the spindle. The protein resides in the spindle pole. The protein localises to the cell projection. It localises to the cilium. Its function is as follows. May play a role in cell-cycle-dependent microtubule organization. This chain is Centrosome and spindle pole-associated protein 1 (CSPP1), found in Homo sapiens (Human).